A 359-amino-acid polypeptide reads, in one-letter code: UDP-3-O-acylglucosamine N-acyltransferase (359 aa).

His247 functions as the Proton acceptor in the catalytic mechanism.

It belongs to the transferase hexapeptide repeat family. LpxD subfamily. Homotrimer.

The catalysed reaction is a UDP-3-O-[(3R)-3-hydroxyacyl]-alpha-D-glucosamine + a (3R)-hydroxyacyl-[ACP] = a UDP-2-N,3-O-bis[(3R)-3-hydroxyacyl]-alpha-D-glucosamine + holo-[ACP] + H(+). It functions in the pathway bacterial outer membrane biogenesis; LPS lipid A biosynthesis. Catalyzes the N-acylation of UDP-3-O-acylglucosamine using 3-hydroxyacyl-ACP as the acyl donor. Is involved in the biosynthesis of lipid A, a phosphorylated glycolipid that anchors the lipopolysaccharide to the outer membrane of the cell. The polypeptide is UDP-3-O-acylglucosamine N-acyltransferase (Chlorobium chlorochromatii (strain CaD3)).